The sequence spans 320 residues: MVGKSVVTLDGLSTNQILDLLHKAEYIDSHRKEVAHTCDGRVLATLFYEPSTRTRLSFETAMLRLGGKVIGFAGAQLASVTKGESIADTLKTVSNYVDVVAIRHPKEGAALVASRAASVPVINAGDGGHMHPTQTLADLATLQSRFGRITDLTVGLCGDLTFGRTVHSLIETLCRFGNVRFVLISPDELKTPQYVIDRINATDNCSYVEVRDLASVIGDLDVLYMTRVQKERFFNEDDYLRLRDTYILDEEKLQLAKPSMAVLHPLPRVNEIAVDVDDDPRAAYFEQVKNGMLVRMALESTVVGDELPGYEPLNSKEVHA.

Carbamoyl phosphate-binding residues include Arg-53 and Thr-54. L-aspartate is bound at residue Lys-82. Carbamoyl phosphate-binding residues include Arg-103, His-131, and Gln-134. L-aspartate is bound by residues Arg-164 and Arg-227. Carbamoyl phosphate contacts are provided by Leu-266 and Pro-267.

It belongs to the aspartate/ornithine carbamoyltransferase superfamily. ATCase family. Heterododecamer (2C3:3R2) of six catalytic PyrB chains organized as two trimers (C3), and six regulatory PyrI chains organized as three dimers (R2).

The catalysed reaction is carbamoyl phosphate + L-aspartate = N-carbamoyl-L-aspartate + phosphate + H(+). The protein operates within pyrimidine metabolism; UMP biosynthesis via de novo pathway; (S)-dihydroorotate from bicarbonate: step 2/3. Functionally, catalyzes the condensation of carbamoyl phosphate and aspartate to form carbamoyl aspartate and inorganic phosphate, the committed step in the de novo pyrimidine nucleotide biosynthesis pathway. This Bifidobacterium longum subsp. infantis (strain ATCC 15697 / DSM 20088 / JCM 1222 / NCTC 11817 / S12) protein is Aspartate carbamoyltransferase catalytic subunit.